Reading from the N-terminus, the 433-residue chain is O-methyltransferase aclM (433 aa).

A coiled-coil region spans residues 5-37; that stretch reads LTDAERTALQTSLEALNRQVEATRNILRSNSQK. S-adenosyl-L-methionine contacts are provided by residues D277 and 311–313; that span reads GDF. Catalysis depends on H330, which acts as the Proton acceptor.

It belongs to the class I-like SAM-binding methyltransferase superfamily. Cation-independent O-methyltransferase family. COMT subfamily.

It functions in the pathway mycotoxin biosynthesis. Functionally, O-methyltransferase; part of the gene cluster that mediates the biosynthesis of aspirochlorine (or antibiotic A30641), an unusual halogenated spiro compound with distinctive antifungal properties due to selective inhibition of protein biosynthesis, and which is also active against bacteria, viruses, and murine tumor cells. The non-ribosomal peptide synthetase (NRPS) aclP is responsible the formation of the diketopiperazine (DKP) core from the condensation of 2 phenylalanine residues. One Phe residue is tailored into chlorotyrosine by hydroxylation and chlorination, whereas the second Phe undergoes an unprecedented C-C bond cleavage to be converted into glycine. After formation of the DKP, sulfur is incorporated into the DKP by conjugation with glutathione by aclG, followed by its stepwise degradation to the thiol by aclI, aclJ and aclK, and the dithiol oxidation by aclT. In addition, oxygenases (aclB, aclC, aclL and aclO) and O-methyltransferases (aclM and aclU) act as tailoring enzymes to produce the intermediate dechloroaspirochlorine. Ultimately, chlorination of dechloroaspirochlorine by the halogenase aclH is the last step in the aspirochlorine pathway. The polypeptide is O-methyltransferase aclM (Aspergillus oryzae (strain ATCC 42149 / RIB 40) (Yellow koji mold)).